A 291-amino-acid polypeptide reads, in one-letter code: Transcription factor bHLH53 (291 aa).

The bHLH domain occupies 163–212 (PTLSSQSIAARGRRRRIAEKTHELGKLIPGGNKLNTAEMFQAAAKYVKFL).

Homodimer. Expressed constitutively in roots, leaves, stems, and flowers.

It localises to the nucleus. The polypeptide is Transcription factor bHLH53 (BHLH53) (Arabidopsis thaliana (Mouse-ear cress)).